We begin with the raw amino-acid sequence, 122 residues long: Large ribosomal subunit protein uL14c (122 aa).

The protein belongs to the universal ribosomal protein uL14 family. In terms of assembly, part of the 50S ribosomal subunit.

The protein resides in the plastid. Its subcellular location is the chloroplast. Binds to 23S rRNA. The chain is Large ribosomal subunit protein uL14c from Carica papaya (Papaya).